The following is a 179-amino-acid chain: Large ribosomal subunit protein uL5 (179 aa).

Belongs to the universal ribosomal protein uL5 family. As to quaternary structure, part of the 50S ribosomal subunit; part of the 5S rRNA/L5/L18/L25 subcomplex. Contacts the 5S rRNA and the P site tRNA. Forms a bridge to the 30S subunit in the 70S ribosome.

Functionally, this is one of the proteins that bind and probably mediate the attachment of the 5S RNA into the large ribosomal subunit, where it forms part of the central protuberance. In the 70S ribosome it contacts protein S13 of the 30S subunit (bridge B1b), connecting the 2 subunits; this bridge is implicated in subunit movement. Contacts the P site tRNA; the 5S rRNA and some of its associated proteins might help stabilize positioning of ribosome-bound tRNAs. This Aromatoleum aromaticum (strain DSM 19018 / LMG 30748 / EbN1) (Azoarcus sp. (strain EbN1)) protein is Large ribosomal subunit protein uL5.